We begin with the raw amino-acid sequence, 379 residues long: Glutamate 5-kinase (379 aa).

Position 15 (lysine 15) interacts with ATP. Residues serine 56, aspartate 143, and asparagine 155 each contribute to the substrate site. 175-176 (SD) provides a ligand contact to ATP. The 78-residue stretch at 281-358 (RGTLAIDAGA…SDAAQLLGVR (78 aa)) folds into the PUA domain.

It belongs to the glutamate 5-kinase family.

The protein resides in the cytoplasm. The catalysed reaction is L-glutamate + ATP = L-glutamyl 5-phosphate + ADP. Its pathway is amino-acid biosynthesis; L-proline biosynthesis; L-glutamate 5-semialdehyde from L-glutamate: step 1/2. Catalyzes the transfer of a phosphate group to glutamate to form L-glutamate 5-phosphate. This is Glutamate 5-kinase from Nitrobacter winogradskyi (strain ATCC 25391 / DSM 10237 / CIP 104748 / NCIMB 11846 / Nb-255).